A 477-amino-acid chain; its full sequence is Glutamyl-tRNA(Gln) amidotransferase subunit A (477 aa).

Residues lysine 76 and serine 151 each act as charge relay system in the active site. Residue serine 175 is the Acyl-ester intermediate of the active site.

Belongs to the amidase family. GatA subfamily. Heterotrimer of A, B and C subunits.

The catalysed reaction is L-glutamyl-tRNA(Gln) + L-glutamine + ATP + H2O = L-glutaminyl-tRNA(Gln) + L-glutamate + ADP + phosphate + H(+). In terms of biological role, allows the formation of correctly charged Gln-tRNA(Gln) through the transamidation of misacylated Glu-tRNA(Gln) in organisms which lack glutaminyl-tRNA synthetase. The reaction takes place in the presence of glutamine and ATP through an activated gamma-phospho-Glu-tRNA(Gln). This chain is Glutamyl-tRNA(Gln) amidotransferase subunit A, found in Chlorobium phaeobacteroides (strain BS1).